Consider the following 212-residue polypeptide: Casparian strip membrane protein 1 (212 aa).

The disordered stretch occupies residues 1–28; it reads MDSSNSTKETGDIPIPVTSSKSSKAAPP. Residues 1–49 lie on the Cytoplasmic side of the membrane; the sequence is MDSSNSTKETGDIPIPVTSSKSSKAAPPPVVAAKAKSTTKQPLVSGWKR. The span at 16–28 shows a compositional bias: low complexity; it reads PVTSSKSSKAAPP. A helical membrane pass occupies residues 50–70; sequence GLGIIDFILRICAIAAALAAA. The Extracellular portion of the chain corresponds to 71–100; that stretch reads TAMGTTSQQLPFFTQFFQFKADYNDLPAFT. Residues 101 to 121 form a helical membrane-spanning segment; that stretch reads FFVIANAMAGAYLVLSLPFSI. Residues 122–133 are Cytoplasmic-facing; sequence LCIVRPHILGAR. A helical transmembrane segment spans residues 134-154; the sequence is LMLLVFDTVAVPLVTAAASAA. Topologically, residues 155-186 are extracellular; sequence ASIVYLAHNGNSDANWVAICRQFNDFCQRVSG. Residues 187–207 form a helical membrane-spanning segment; the sequence is AVVASFITALLFVVLVAVSAV. Residues 208 to 212 lie on the Cytoplasmic side of the membrane; it reads ALRQK.

This sequence belongs to the Casparian strip membrane proteins (CASP) family. As to quaternary structure, homodimer and heterodimers.

The protein localises to the cell membrane. Functionally, regulates membrane-cell wall junctions and localized cell wall deposition. Required for establishment of the Casparian strip membrane domain (CSD) and the subsequent formation of Casparian strips, a cell wall modification of the root endodermis that determines an apoplastic barrier between the intraorganismal apoplasm and the extraorganismal apoplasm and prevents lateral diffusion. In Helianthus annuus (Common sunflower), this protein is Casparian strip membrane protein 1.